Reading from the N-terminus, the 85-residue chain is U4-theraphotoxin-Hhn1j (85 aa).

An N-terminal signal peptide occupies residues 1-22; it reads MKVTLIAILTCAAVLVLHTTAA. Positions 23-48 are excised as a propeptide; the sequence is EELEAESQLMEVGMPDTELAAVDEER. 3 disulfide bridges follow: cysteine 52/cysteine 66, cysteine 56/cysteine 77, and cysteine 71/cysteine 82.

Belongs to the neurotoxin 12 (Hwtx-2) family. 02 (Hwtx-2) subfamily. As to expression, expressed by the venom gland.

The protein resides in the secreted. In terms of biological role, postsynaptic neurotoxin. The chain is U4-theraphotoxin-Hhn1j from Cyriopagopus hainanus (Chinese bird spider).